A 354-amino-acid chain; its full sequence is MQGLLFSTLLLAGLAQFCCRVQGTGPLDTTPEGRPGEVSDAPQRKQFCHWPCKCPQQKPRCPPGVSLVRDGCGCCKICAKQPGEICNEADLCDPHKGLYCDYSVDRPRYETGVCAYLVAVGCEFNQVHYHNGQVFQPNPLFSCLCVSGAIGCTPLFIPKLAGSHCSGAKGGKKSDQSNCSLEPLLQQLSTSYKTMPAYRNLPLIWKKKCLVQATKWTPCSRTCGMGISNRVTNENSNCEMRKEKRLCYIQPCDSNILKTIKIPKGKTCQPTFQLSKAEKFVFSGCSSTQSYKPTFCGICLDKRCCIPNKSKMITIQFDCPNEGSFKWKMLWITSCVCQRNCREPGDIFSELKIL.

A signal peptide spans Met-1–Gly-23. The region spanning Arg-44–Leu-117 is the IGFBP N-terminal domain. 6 disulfides stabilise this stretch: Cys-48–Cys-72, Cys-52–Cys-74, Cys-54–Cys-75, Cys-61–Cys-78, Cys-86–Cys-100, and Cys-92–Cys-114. N-linked (GlcNAc...) asparagine glycosylation occurs at Asn-178. The 46-residue stretch at Lys-208–Asp-253 folds into the TSP type-1 domain. 5 disulfides stabilise this stretch: Cys-268–Cys-305, Cys-285–Cys-319, Cys-296–Cys-335, Cys-299–Cys-337, and Cys-304–Cys-341. Positions Cys-268–Arg-342 constitute a CTCK domain. An N-linked (GlcNAc...) asparagine glycan is attached at Asn-308.

This sequence belongs to the CCN family. In terms of tissue distribution, predominant expression in adult kidney and testis and fetal kidney. Weaker expression found in placenta, ovary, prostate and small intestine. Also expressed in skeletally-derived cells such as synoviocytes and articular cartilage chondrocytes.

The protein localises to the secreted. The protein resides in the mitochondrion. Its function is as follows. Plays a role in mitochondrial electron transport and mitochondrial respiration. Through its regulation of the mitochondrial function may play a role in normal postnatal skeletal growth and cartilage homeostasis. The chain is Cellular communication network factor 6 from Homo sapiens (Human).